We begin with the raw amino-acid sequence, 25 residues long: Cruzioseptin-13 (25 aa).

Asparagine 25 carries the asparagine amide modification.

As to expression, expressed by the skin glands.

It is found in the secreted. In terms of biological role, has antimicrobial activity. In Cruziohyla calcarifer (Splendid leaf frog), this protein is Cruzioseptin-13.